The following is a 350-amino-acid chain: MSKNKLSKGQQRRVNANHQRRLKTSKEKPDYDDNLFGEPDEGIVISRFGMHADVESADGDVHRCNIRRTIRSLVTGDRVVWRPGKPAAEGVNVKGIVEAVHERTSVLTRPDFYDGVKPIAANIDQIVIVSAILPELSLNIIDRYLVACETLQIEPIIVLNKIDLLDDEGMAFVNEQMDIYRNIGYRVLMVSSHTQDGLKPLAEALTGRISIFAGQSGVGKSSLLNALLGLQKEILTNDVSDNSGLGQHTTTAARLYHFPHGGDVIDSPGVREFGLWHLEPEQITQGFVEFHDYLGLCKYRDCKHDTDPGCAIREAVEEGKIAETRFENYHRILESMAQVKTRKNFSDTDD.

A compositionally biased stretch (polar residues) spans 1–17; the sequence is MSKNKLSKGQQRRVNAN. The interval 1–33 is disordered; sequence MSKNKLSKGQQRRVNANHQRRLKTSKEKPDYDD. Residues 104–273 form the CP-type G domain; sequence TSVLTRPDFY…VIDSPGVREF (170 aa). Residues 160 to 163 and 214 to 222 each bind GTP; these read NKID and GQSGVGKSS. 4 residues coordinate Zn(2+): Cys297, Cys302, His304, and Cys310.

This sequence belongs to the TRAFAC class YlqF/YawG GTPase family. RsgA subfamily. Monomer. Associates with 30S ribosomal subunit, binds 16S rRNA. Requires Zn(2+) as cofactor.

The protein resides in the cytoplasm. Functionally, one of several proteins that assist in the late maturation steps of the functional core of the 30S ribosomal subunit. Helps release RbfA from mature subunits. May play a role in the assembly of ribosomal proteins into the subunit. Circularly permuted GTPase that catalyzes slow GTP hydrolysis, GTPase activity is stimulated by the 30S ribosomal subunit. The sequence is that of Small ribosomal subunit biogenesis GTPase RsgA from Shigella flexneri.